A 113-amino-acid chain; its full sequence is MHEMSLCEGIRGIVEDQARRHGFSRVTRMRLEIGRFAGVEKAALSFAFDVVMRGSPAEGAVLEMIDLPGRAMCFDCAEQVELDDRLSPCPLCGGGRLMPETGDEMRIRDMEVI.

Residue His2 participates in Ni(2+) binding. Residues Cys73, Cys76, Cys89, and Cys92 each contribute to the Zn(2+) site.

Belongs to the HypA/HybF family.

Its function is as follows. Involved in the maturation of [NiFe] hydrogenases. Required for nickel insertion into the metal center of the hydrogenase. The chain is Hydrogenase maturation factor HypA from Paracoccus denitrificans (strain Pd 1222).